Consider the following 334-residue polypeptide: WD repeat-containing protein 54 (334 aa).

WD repeat units follow at residues 162 to 206 (GHQM…TLLT), 208 to 247 (IPGFGVPCPSVQLWQGIIAAGYGNGQVHLYEATTGNLHVQ), and 250 to 289 (AHARAICALDLASEVGKLLSAGEDTFVHIWKLSRNPESGY).

As to quaternary structure, homodimer and homotrimer; forms tight forms of dimers and trimers. Interacts with IZUMO1 and IZUMO1R/JUNO. Cross-linked to tightly form both dimers and trimers by TGM2. Cross-linking enhances the activation of EGF receptor-mediated signaling pathway. Cross-linking is inhibited by EGF. Post-translationally, ubiquitinated. EGF increases ubiquitination. Expressed in epithelial cells (at protein level). Isoform 3 expression is highly increased in colorectal cancer cells.

The protein resides in the vesicle. It localises to the cytoplasm. Its subcellular location is the cell membrane. Functionally, plays a role in the adhesion and fusion of the sperm-oocyte membrane through its interactions with IZUMO1 and IZUMO1R/JUNO. When cross-linked to form dimers and trimers, it has a regulatory effect on ERK signaling pathway activity in response to EGF stimulation. Colocalizes with the EGF receptor in WDR54-specific vesicle where it sustains the internalization and controls the degradation of the EGF receptor after EGF stimulation. This Homo sapiens (Human) protein is WD repeat-containing protein 54.